The following is a 331-amino-acid chain: Biotin synthase (331 aa).

One can recognise a Radical SAM core domain in the interval 52 to 277 (PDVEVEGIIS…RTMLRFAGGR (226 aa)). [4Fe-4S] cluster-binding residues include Cys-67, Cys-71, and Cys-74. [2Fe-2S] cluster contacts are provided by Cys-110, Cys-143, Cys-202, and Arg-272.

Belongs to the radical SAM superfamily. Biotin synthase family. In terms of assembly, homodimer. [4Fe-4S] cluster is required as a cofactor. [2Fe-2S] cluster serves as cofactor.

The enzyme catalyses (4R,5S)-dethiobiotin + (sulfur carrier)-SH + 2 reduced [2Fe-2S]-[ferredoxin] + 2 S-adenosyl-L-methionine = (sulfur carrier)-H + biotin + 2 5'-deoxyadenosine + 2 L-methionine + 2 oxidized [2Fe-2S]-[ferredoxin]. It functions in the pathway cofactor biosynthesis; biotin biosynthesis; biotin from 7,8-diaminononanoate: step 2/2. Its function is as follows. Catalyzes the conversion of dethiobiotin (DTB) to biotin by the insertion of a sulfur atom into dethiobiotin via a radical-based mechanism. In Mycobacterium sp. (strain JLS), this protein is Biotin synthase.